Reading from the N-terminus, the 169-residue chain is NADH-quinone oxidoreductase subunit B (169 aa).

The [4Fe-4S] cluster site is built by Cys-45, Cys-46, Cys-111, and Cys-141.

This sequence belongs to the complex I 20 kDa subunit family. NDH-1 is composed of 14 different subunits. Subunits NuoB, C, D, E, F, and G constitute the peripheral sector of the complex. It depends on [4Fe-4S] cluster as a cofactor.

The protein localises to the cell membrane. It carries out the reaction a quinone + NADH + 5 H(+)(in) = a quinol + NAD(+) + 4 H(+)(out). In terms of biological role, NDH-1 shuttles electrons from NADH, via FMN and iron-sulfur (Fe-S) centers, to quinones in the respiratory chain. The immediate electron acceptor for the enzyme in this species is believed to be a menaquinone. Couples the redox reaction to proton translocation (for every two electrons transferred, four hydrogen ions are translocated across the cytoplasmic membrane), and thus conserves the redox energy in a proton gradient. In Clostridium beijerinckii (strain ATCC 51743 / NCIMB 8052) (Clostridium acetobutylicum), this protein is NADH-quinone oxidoreductase subunit B.